We begin with the raw amino-acid sequence, 206 residues long: Transcription antitermination protein NusB (206 aa).

The interval 135–206 is disordered; sequence ARGEKTSAQE…ETQPPGVNEV (72 aa). Residues 169–180 show a composition bias toward low complexity; the sequence is ATPATTPVTTTV.

Belongs to the NusB family.

Its function is as follows. Involved in transcription antitermination. Required for transcription of ribosomal RNA (rRNA) genes. Binds specifically to the boxA antiterminator sequence of the ribosomal RNA (rrn) operons. In Heliobacterium modesticaldum (strain ATCC 51547 / Ice1), this protein is Transcription antitermination protein NusB.